Here is a 157-residue protein sequence, read N- to C-terminus: SsrA-binding protein (157 aa).

The segment covering 136–151 (KRETEKKRDWSREKGR) has biased composition (basic and acidic residues). A disordered region spans residues 136–157 (KRETEKKRDWSREKGRLLRARG).

The protein belongs to the SmpB family.

Its subcellular location is the cytoplasm. Functionally, required for rescue of stalled ribosomes mediated by trans-translation. Binds to transfer-messenger RNA (tmRNA), required for stable association of tmRNA with ribosomes. tmRNA and SmpB together mimic tRNA shape, replacing the anticodon stem-loop with SmpB. tmRNA is encoded by the ssrA gene; the 2 termini fold to resemble tRNA(Ala) and it encodes a 'tag peptide', a short internal open reading frame. During trans-translation Ala-aminoacylated tmRNA acts like a tRNA, entering the A-site of stalled ribosomes, displacing the stalled mRNA. The ribosome then switches to translate the ORF on the tmRNA; the nascent peptide is terminated with the 'tag peptide' encoded by the tmRNA and targeted for degradation. The ribosome is freed to recommence translation, which seems to be the essential function of trans-translation. This Rhodopseudomonas palustris (strain HaA2) protein is SsrA-binding protein.